Consider the following 644-residue polypeptide: Protein ETHYLENE-INSENSITIVE 3-like 1b (644 aa).

Disordered stretches follow at residues 47 to 75 (QCVM…DDDV) and 97 to 131 (ELQL…KMSR). Over residues 66-75 (AGEDDSDDDV) the composition is skewed to acidic residues.

The protein belongs to the EIN3 family. As to expression, highly expressed in roots. Expressed at low levels in leaves and panicles.

The protein resides in the nucleus. In terms of biological role, transcription factor acting as a positive regulator in the ethylene response pathway. Involved in wound signaling by binding specifically to the DNA sequence 5'-ATGTACCT-3' found in the promoter of some wound-inducible genes. Binds directly to the DNA sequence 5'-TGTTACAAATACC-3' in the promoter of the GA20OX2 gene to activate its expression at the transcriptional level during ethylene signaling. The sequence is that of Protein ETHYLENE-INSENSITIVE 3-like 1b from Oryza sativa subsp. japonica (Rice).